We begin with the raw amino-acid sequence, 57 residues long: DELTA-limacoditoxin(2)-Dv11 (57 aa).

Residues 1 to 24 (MKFAKTFLLLFVVLLLLSIVMAEP) form the signal peptide.

This sequence belongs to the limacoditoxin-2 (cecropin-like) family. In terms of tissue distribution, expressed by the venom secretory cell of the spine. The spine is a cuticular structure containing a single large nucleated venom-secreting cell at its base. It is an independent unit capable of producing, storing and injecting venom. On the back of D.vulnerans caterpillars, spines are grouped together by 50 to 100 to form scoli, of which there are eight in D.vulnerans.

The protein localises to the secreted. In terms of biological role, peptide that induces pain in mammals and has insecticidal, antibacterial and antiparasitic activities. Induces partially reversible paralysis in D.melanogaster when tested at high doses. Shows a moderate antiparasitic activity against the major pathogenic nematode of ruminants (H.contortus, EC(50)=30.5 uM). Has potent or moderate antibacterial activities against A.baumannii (MIC&lt;0.25 ug/mL) and S.aureus (MIC=16 ug/mL). Has no activity on the other bacteria tested, nor on the fungus C.albicans. Strongly induces the increase of intracellular calcium in mice DRG neurons, which is a proxy for neuronal activation that would occur during nociception. This increase is due to influx of extracellular calcium, suggesting that the peptide forms pore or channel in neuronal cell membranes. In addition, intraplantar injection in mice provokes nocifensive behavior, suggesting a pain-inducing activity. The sequence is that of DELTA-limacoditoxin(2)-Dv11 from Doratifera vulnerans (Mottled cup moth).